Here is a 94-residue protein sequence, read N- to C-terminus: Protein LURE 1.1 (94 aa).

Positions 1–19 are cleaved as a signal peptide; the sequence is MKLIFIFLTLLIFVSSCTS. Cystine bridges form between Cys-58–Cys-75, Cys-61–Cys-82, and Cys-65–Cys-84. The interval 67 to 87 is PRK6 binding; it reads RRDRYIRTCSFERKLCRCSYS.

This sequence belongs to the DEFL family. As to quaternary structure, binds to PRK6 LRRs. Expressed in the pistil. Detected exclusively in the synergid cells.

Its subcellular location is the secreted. Functionally, pollen tube attractants guiding pollen tubes to the ovular micropyle. The sequence is that of Protein LURE 1.1 from Arabidopsis thaliana (Mouse-ear cress).